The sequence spans 984 residues: Serine/threonine-protein kinase Nek9 (984 aa).

Position 2 is an N-acetylserine (Ser-2). Phosphoserine occurs at positions 2, 13, 16, and 20. Positions 14–43 (INSDFGSESGGGGDSGPGPSAVPGPRAGGG) are disordered. A Phosphotyrosine modification is found at Tyr-52. The Protein kinase domain maps to 52-308 (YIPIRVLGRG…ADALLDLPLL (257 aa)). 58-66 (LGRGAFGEA) provides a ligand contact to ATP. A Phosphoserine modification is found at Ser-76. Position 81 (Lys-81) interacts with ATP. The Proton acceptor role is filled by Asp-176. Thr-210 is subject to Phosphothreonine; by autocatalysis. Position 254 is a phosphothreonine (Thr-254). A Phosphoserine modification is found at Ser-331. Residue Thr-333 is modified to Phosphothreonine. 6 RCC1 repeats span residues 388-444 (KELY…VTDE), 445-498 (GQLY…LTRN), 499-550 (KEVY…LTQS), 551-615 (GKVL…IDER), 616-668 (GRLL…ATDD), and 669-726 (NHIF…IVEK). The interval 732–896 (TIRSNSSGLS…GKALTSAACA (165 aa)) is interaction with NEK6. A Phosphoserine modification is found at Ser-741. A disordered region spans residues 744-790 (TVVQSSSPGGGIGGGGGGGGGGGGEEEDSQQESETPDPSGGFRGTME). The span at 751-766 (PGGGIGGGGGGGGGGG) shows a compositional bias: gly residues. Positions 767–778 (GEEEDSQQESET) are enriched in acidic residues. Residues Ser-808 and Ser-839 each carry the phosphoserine modification. At Thr-891 the chain carries Phosphothreonine. Residues 896–945 (ACSALQVEVDRLQALVLKCLEEQQKLQQENLQMFTQLQKLNKKLEGGQQV) are a coiled coil. The interval 940 to 984 (EGGQQVGMHSRGTQTAKEEMEMDPKPDLDSESWCLLGTDSCRPSL) is disordered. Ser-949 is modified (phosphoserine). Residues 955–967 (AKEEMEMDPKPDL) are compositionally biased toward basic and acidic residues. At Ser-983 the chain carries Phosphoserine.

It belongs to the protein kinase superfamily. NEK Ser/Thr protein kinase family. NIMA subfamily. As to quaternary structure, homodimer; homodimerization is required to activate NEK7. Binds to Ran GTPase. Has a greater affinity for Ran-GDP over Ran-GTP. Interacts with SSRP1 and SUPT16H, the 2 subunits of the FACT complex. Interacts with DYNLL1; phosphorylation at Ser-949 strongly reduces DYNLL1 binding. Mg(2+) is required as a cofactor. Post-translationally, autophosphorylated on serine and threonine residues. When complexed with FACT, exhibits markedly elevated phosphorylation on Thr-210. During mitosis, not phosphorylated on Thr-210. Phosphorylated by CDK1 in vitro.

The protein localises to the cytoplasm. The protein resides in the nucleus. It carries out the reaction L-seryl-[protein] + ATP = O-phospho-L-seryl-[protein] + ADP + H(+). The catalysed reaction is L-threonyl-[protein] + ATP = O-phospho-L-threonyl-[protein] + ADP + H(+). Activated during mitosis by intramolecular autophosphorylation. Activity and autophosphorylation is activated by manganese &gt;&gt; magnesium ions. It is not cell-cycle regulated but activity is higher in G0-arrested cells. Functionally, pleiotropic regulator of mitotic progression, participating in the control of spindle dynamics and chromosome separation. Phosphorylates different histones, myelin basic protein, beta-casein, and BICD2. Phosphorylates histone H3 on serine and threonine residues and beta-casein on serine residues. Important for G1/S transition and S phase progression. Phosphorylates NEK6 and NEK7 and stimulates their activity by releasing the autoinhibitory functions of Tyr-108 and Tyr-97 respectively. The polypeptide is Serine/threonine-protein kinase Nek9 (Mus musculus (Mouse)).